A 389-amino-acid polypeptide reads, in one-letter code: NADH-quinone oxidoreductase subunit D (389 aa).

This sequence belongs to the complex I 49 kDa subunit family. NDH-1 is composed of 14 different subunits. Subunits NuoB, C, D, E, F, and G constitute the peripheral sector of the complex.

The protein resides in the cell inner membrane. The catalysed reaction is a quinone + NADH + 5 H(+)(in) = a quinol + NAD(+) + 4 H(+)(out). Functionally, NDH-1 shuttles electrons from NADH, via FMN and iron-sulfur (Fe-S) centers, to quinones in the respiratory chain. The immediate electron acceptor for the enzyme in this species is believed to be ubiquinone. Couples the redox reaction to proton translocation (for every two electrons transferred, four hydrogen ions are translocated across the cytoplasmic membrane), and thus conserves the redox energy in a proton gradient. The chain is NADH-quinone oxidoreductase subunit D from Rickettsia prowazekii (strain Madrid E).